Consider the following 484-residue polypeptide: Carbohydrate sulfotransferase 7 (484 aa).

Residues 1–12 (MKGRRRRRREYC) are Cytoplasmic-facing. Residues 13–33 (KFTLLLALYTLLLLLVPSVLD) form a helical; Signal-anchor for type II membrane protein membrane-spanning segment. Residues 34-484 (SHSEQDKGRN…PLETKANWAV (451 aa)) are Lumenal-facing. The disordered stretch occupies residues 71–90 (RSLAEGNPDRSPGSPGNLSA). Asn87 is a glycosylation site (N-linked (GlcNAc...) asparagine). 108–114 (WRTGSSF) contributes to the 3'-phosphoadenylyl sulfate binding site. Asn184 is a glycosylation site (N-linked (GlcNAc...) asparagine). 276 to 284 (RDPRAVHNS) is a binding site for 3'-phosphoadenylyl sulfate. Asn405 carries N-linked (GlcNAc...) asparagine glycosylation. Ser460 carries the post-translational modification Phosphoserine. A compositionally biased stretch (basic and acidic residues) spans 460–473 (SGDERDRKTVREGE). The segment at 460–484 (SGDERDRKTVREGETPLETKANWAV) is disordered.

Belongs to the sulfotransferase 1 family. Gal/GlcNAc/GalNAc subfamily. In terms of tissue distribution, widely expressed. Highly expressed in kidney. Expressed at lower level in heart, lung and liver.

It localises to the golgi apparatus membrane. It catalyses the reaction chondroitin beta-D-glucuronate + n 3'-phosphoadenylyl sulfate = chondroitin 6'-sulfate + n adenosine 3',5'-bisphosphate + n H(+). Its function is as follows. Sulfotransferase that utilizes 3'-phospho-5'-adenylyl sulfate (PAPS) as sulfonate donor to catalyze the transfer of sulfate to position 6 of non-reducing N-acetylglucosamine (GlcNAc) residues. Preferentially acts on mannose-linked GlcNAc. Also able to catalyze the transfer of sulfate to position 6 of the N-acetylgalactosamine (GalNAc) residue of chondroitin. Also acts on core 2 mucin-type oligosaccharide and N-acetyllactosamine oligomer with a lower efficiency. Has weak or no activity toward keratan sulfate and oligosaccharides containing the Galbeta1-4GlcNAc. Catalyzes 6-O-sulfation of beta-benzyl GlcNAc but not alpha- or beta-benzyl GalNAc. This is Carbohydrate sulfotransferase 7 (Chst7) from Mus musculus (Mouse).